Here is a 316-residue protein sequence, read N- to C-terminus: MTETFQHISVLLNESIDGLAIKPDGIYIDGTFGRGGHSRTILSKLGENGRLYSIDRDPQAIAEAAKIDDPRFTIIHGPFSGMAKYAEEYGLVGKVDGVLLDLGVSSPQLDDAERGFSFMKDGPLDMRMDPTSGIPVSQWLMEADLDDITWVIREFGEDKHARRIAKAIVAYREDEENEPMVRTGQLAKLISDAAPKSFKEKKHPATRAFQAFRIYINSELEEIDTALKGAASILAPEGRLSVISFHSLEDRMVKRFIRKESKGPEVPHGIPMTEEQIRALGSANMKPIGKANKPTKQEIDMNPRSRSSVLRIAEKL.

S-adenosyl-L-methionine is bound by residues 35 to 37, Asp-55, Phe-79, Asp-101, and Gln-108; that span reads GGH.

Belongs to the methyltransferase superfamily. RsmH family.

The protein localises to the cytoplasm. The catalysed reaction is cytidine(1402) in 16S rRNA + S-adenosyl-L-methionine = N(4)-methylcytidine(1402) in 16S rRNA + S-adenosyl-L-homocysteine + H(+). Its function is as follows. Specifically methylates the N4 position of cytidine in position 1402 (C1402) of 16S rRNA. The chain is Ribosomal RNA small subunit methyltransferase H from Vibrio campbellii (strain ATCC BAA-1116).